The chain runs to 177 residues: ATP synthase subunit delta (177 aa).

This sequence belongs to the ATPase delta chain family. In terms of assembly, F-type ATPases have 2 components, F(1) - the catalytic core - and F(0) - the membrane proton channel. F(1) has five subunits: alpha(3), beta(3), gamma(1), delta(1), epsilon(1). F(0) has three main subunits: a(1), b(2) and c(10-14). The alpha and beta chains form an alternating ring which encloses part of the gamma chain. F(1) is attached to F(0) by a central stalk formed by the gamma and epsilon chains, while a peripheral stalk is formed by the delta and b chains.

Its subcellular location is the cell inner membrane. Functionally, f(1)F(0) ATP synthase produces ATP from ADP in the presence of a proton or sodium gradient. F-type ATPases consist of two structural domains, F(1) containing the extramembraneous catalytic core and F(0) containing the membrane proton channel, linked together by a central stalk and a peripheral stalk. During catalysis, ATP synthesis in the catalytic domain of F(1) is coupled via a rotary mechanism of the central stalk subunits to proton translocation. Its function is as follows. This protein is part of the stalk that links CF(0) to CF(1). It either transmits conformational changes from CF(0) to CF(1) or is implicated in proton conduction. In Shewanella denitrificans (strain OS217 / ATCC BAA-1090 / DSM 15013), this protein is ATP synthase subunit delta.